Reading from the N-terminus, the 110-residue chain is Large ribosomal subunit protein uL22 (110 aa).

This sequence belongs to the universal ribosomal protein uL22 family. As to quaternary structure, part of the 50S ribosomal subunit.

Functionally, this protein binds specifically to 23S rRNA; its binding is stimulated by other ribosomal proteins, e.g. L4, L17, and L20. It is important during the early stages of 50S assembly. It makes multiple contacts with different domains of the 23S rRNA in the assembled 50S subunit and ribosome. Its function is as follows. The globular domain of the protein is located near the polypeptide exit tunnel on the outside of the subunit, while an extended beta-hairpin is found that lines the wall of the exit tunnel in the center of the 70S ribosome. This Alkaliphilus oremlandii (strain OhILAs) (Clostridium oremlandii (strain OhILAs)) protein is Large ribosomal subunit protein uL22.